Here is a 104-residue protein sequence, read N- to C-terminus: V-type ATP synthase subunit F (104 aa).

Belongs to the V-ATPase F subunit family.

Produces ATP from ADP in the presence of a proton gradient across the membrane. In Thermus thermophilus (strain ATCC BAA-163 / DSM 7039 / HB27), this protein is V-type ATP synthase subunit F.